Reading from the N-terminus, the 393-residue chain is Chorismate synthase (393 aa).

Arg39 and Arg45 together coordinate NADP(+). FMN-binding positions include Arg133–Ser135, Asn256–Ala257, Gly301, Lys316–Thr320, and Arg342.

The protein belongs to the chorismate synthase family. Homotetramer. FMNH2 is required as a cofactor.

The enzyme catalyses 5-O-(1-carboxyvinyl)-3-phosphoshikimate = chorismate + phosphate. It participates in metabolic intermediate biosynthesis; chorismate biosynthesis; chorismate from D-erythrose 4-phosphate and phosphoenolpyruvate: step 7/7. In terms of biological role, catalyzes the anti-1,4-elimination of the C-3 phosphate and the C-6 proR hydrogen from 5-enolpyruvylshikimate-3-phosphate (EPSP) to yield chorismate, which is the branch point compound that serves as the starting substrate for the three terminal pathways of aromatic amino acid biosynthesis. This reaction introduces a second double bond into the aromatic ring system. In Lysinibacillus sphaericus (strain C3-41), this protein is Chorismate synthase.